The primary structure comprises 441 residues: Adenylyltransferase and sulfurtransferase MOCS3 (441 aa).

ATP-binding positions include G83, D104, 111–115 (TNLHR), K128, and 172–173 (DN). Positions 213 and 216 each coordinate Zn(2+). C230 functions as the Glycyl thioester intermediate; for adenylyltransferase activity in the catalytic mechanism. Zn(2+) is bound by residues C288 and C291. Residues 339–439 (AGRDHLLVDV…WTKTIDPNFP (101 aa)) form the Rhodanese domain. C395 functions as the Cysteine persulfide intermediate; for sulfurtransferase activity in the catalytic mechanism.

The protein in the N-terminal section; belongs to the HesA/MoeB/ThiF family. UBA4 subfamily. The cofactor is Zn(2+).

It localises to the cytoplasm. The catalysed reaction is [molybdopterin-synthase sulfur-carrier protein]-C-terminal Gly-Gly + ATP + H(+) = [molybdopterin-synthase sulfur-carrier protein]-C-terminal Gly-Gly-AMP + diphosphate. It carries out the reaction [molybdopterin-synthase sulfur-carrier protein]-C-terminal Gly-Gly-AMP + S-sulfanyl-L-cysteinyl-[cysteine desulfurase] + AH2 = [molybdopterin-synthase sulfur-carrier protein]-C-terminal-Gly-aminoethanethioate + L-cysteinyl-[cysteine desulfurase] + A + AMP + 2 H(+). It functions in the pathway tRNA modification; 5-methoxycarbonylmethyl-2-thiouridine-tRNA biosynthesis. It participates in cofactor biosynthesis; molybdopterin biosynthesis. Functionally, plays a central role in 2-thiolation of mcm(5)S(2)U at tRNA wobble positions of cytosolic tRNA(Lys), tRNA(Glu) and tRNA(Gln). Also essential during biosynthesis of the molybdenum cofactor. Acts by mediating the C-terminal thiocarboxylation of sulfur carriers URM1 and MOCS2A. Its N-terminus first activates URM1 and MOCS2A as acyl-adenylates (-COAMP), then the persulfide sulfur on the catalytic cysteine is transferred to URM1 and MOCS2A to form thiocarboxylation (-COSH) of their C-terminus. The reaction probably involves hydrogen sulfide that is generated from the persulfide intermediate and that acts as a nucleophile towards URM1 and MOCS2A. Subsequently, a transient disulfide bond is formed. Does not use thiosulfate as sulfur donor; NFS1 probably acting as a sulfur donor for thiocarboxylation reactions. The polypeptide is Adenylyltransferase and sulfurtransferase MOCS3 (Anopheles gambiae (African malaria mosquito)).